The primary structure comprises 245 residues: Octopine transport system permease protein OccM (245 aa).

Helical transmembrane passes span 12–32 (FVAL…SVAL), 57–77 (FYIF…IYYG), 96–116 (AYWC…AEIM), 163–183 (ILMV…ITGI), and 204–224 (IYLI…WALW). The ABC transmembrane type-1 domain maps to 19 to 216 (IPLALQLAVF…ILNFIVARLF (198 aa)).

The protein belongs to the binding-protein-dependent transport system permease family. HisMQ subfamily.

Its subcellular location is the cell inner membrane. Functionally, component of the octopine active transport system probably consisting of four subunits: Q, M, P and T. The protein is Octopine transport system permease protein OccM (occM) of Rhizobium radiobacter (Agrobacterium tumefaciens).